Here is a 229-residue protein sequence, read N- to C-terminus: Transmembrane protein 217 (229 aa).

The chain crosses the membrane as a helical span at residues 13–33; sequence MGTVLSGVFTIMAVDMYLIFE. The N-linked (GlcNAc...) asparagine glycan is linked to Asn-39. 3 helical membrane passes run 67–87, 94–114, and 129–149; these read IVLF…YSVY, LVIY…IQIL, and WFGL…VINY. Asn-156 is a glycosylation site (N-linked (GlcNAc...) asparagine).

It localises to the membrane. This Homo sapiens (Human) protein is Transmembrane protein 217 (TMEM217).